The chain runs to 296 residues: NAD kinase (296 aa).

Asp-73 serves as the catalytic Proton acceptor. NAD(+) contacts are provided by residues 73–74, Lys-78, 151–152, Arg-178, Asp-180, and 191–196; these read DG, NE, and TAHAMS.

It belongs to the NAD kinase family. It depends on a divalent metal cation as a cofactor.

The protein resides in the cytoplasm. It carries out the reaction NAD(+) + ATP = ADP + NADP(+) + H(+). Its function is as follows. Involved in the regulation of the intracellular balance of NAD and NADP, and is a key enzyme in the biosynthesis of NADP. Catalyzes specifically the phosphorylation on 2'-hydroxyl of the adenosine moiety of NAD to yield NADP. The chain is NAD kinase from Francisella tularensis subsp. tularensis (strain FSC 198).